We begin with the raw amino-acid sequence, 336 residues long: Casein kinase II subunit alpha (336 aa).

The region spanning 32–317 (YEVVRKIGRG…AKEAMAHPYF (286 aa)) is the Protein kinase domain. ATP contacts are provided by residues 38-46 (IGRGKYSEV) and Lys-61. The active-site Proton acceptor is the Asp-149.

It belongs to the protein kinase superfamily. Ser/Thr protein kinase family. CK2 subfamily. As to quaternary structure, tetramer composed of two alpha chains, one beta chain and one beta' chain.

It carries out the reaction L-seryl-[protein] + ATP = O-phospho-L-seryl-[protein] + ADP + H(+). The catalysed reaction is L-threonyl-[protein] + ATP = O-phospho-L-threonyl-[protein] + ADP + H(+). Catalytic subunit of a constitutively active serine/threonine-protein kinase complex that phosphorylates a large number of substrates containing acidic residues C-terminal to the phosphorylated serine or threonine. Phosphorylates the frq clock protein thus regulating the circadian clock. This chain is Casein kinase II subunit alpha (cka), found in Neurospora crassa (strain ATCC 24698 / 74-OR23-1A / CBS 708.71 / DSM 1257 / FGSC 987).